The chain runs to 214 residues: MKKILVTGFDPFGGEKINPALEVIKLLPKKIGENEIKILEIPTVYKKSIEKIDKEIESYDPDYILSIGQAGGRTDISIERIAINIDDFRIKDNEGNQPIDEKIYLDGDNAYFSTLPIKAIQSEITKNGIPASISNTAGTFVCNHVFYGVRYLIEKKYKGKKSGFIHIPYLPEQIIGKADTPSMSLDNILKGITIAIEIIFSVENDIKKLGGSIC.

Residues glutamate 79, cysteine 142, and histidine 166 contribute to the active site.

The protein belongs to the peptidase C15 family. In terms of assembly, homotetramer.

It localises to the cytoplasm. The catalysed reaction is Release of an N-terminal pyroglutamyl group from a polypeptide, the second amino acid generally not being Pro.. Functionally, removes 5-oxoproline from various penultimate amino acid residues except L-proline. This chain is Pyrrolidone-carboxylate peptidase, found in Fusobacterium nucleatum subsp. nucleatum (strain ATCC 25586 / DSM 15643 / BCRC 10681 / CIP 101130 / JCM 8532 / KCTC 2640 / LMG 13131 / VPI 4355).